We begin with the raw amino-acid sequence, 47 residues long: Ruminococcin-A (47 aa).

The first 23 residues, 1–23 (MRNDVLTLTNPMEENELEQILGG), serve as a signal peptide directing secretion. 2 positions are modified to 2,3-didehydrobutyrine: T30 and T39. The segment at residues 30–35 (TISHEC) is a cross-link (beta-methyllanthionine (Thr-Cys)). Positions 32-46 (SHECNMNTWQFLFTC) form a cross-link, lanthionine (Ser-Cys). Residues 45 to 47 (TCC) constitute a cross-link (beta-methyllanthionine (Thr-Cys)).

The protein belongs to the type A lantibiotic family. Post-translationally, maturation of lantibiotics involves the enzymatic conversion of Thr, and Ser into dehydrated AA and the formation of thioether bonds with cysteine. This is followed by membrane translocation and cleavage of the modified precursor.

It is found in the secreted. Functionally, lanthionine-containing peptide antibiotic (lantibiotic) active on Gram-positive bacteria. The bactericidal activity of lantibiotics is based on depolarization of energized bacterial cytoplasmic membranes, initiated by the formation of aqueous transmembrane pores. Ruminococcin A is a broad spectrum bacteriocin exhibiting activity against a wide range of pathogenic clostridia and B.longum. The polypeptide is Ruminococcin-A (rumA1) (Blautia hansenii (Ruminococcus hansenii)).